Consider the following 115-residue polypeptide: U3-lycotoxin-Ls1a (115 aa).

Positions Met-1–Ala-20 are cleaved as a signal peptide. A propeptide spanning residues Glu-21 to Arg-44 is cleaved from the precursor. Cystine bridges form between Cys-48–Cys-63, Cys-55–Cys-72, Cys-62–Cys-87, and Cys-74–Cys-85.

This sequence belongs to the neurotoxin 19 (CSTX) family. 01 subfamily. As to expression, expressed by the venom gland.

It localises to the secreted. The polypeptide is U3-lycotoxin-Ls1a (Lycosa singoriensis (Wolf spider)).